The sequence spans 257 residues: Transmembrane protein C257L (257 aa).

Transmembrane regions (helical) follow at residues 123–143 (LELL…FTAL) and 163–183 (MMIF…YVLV).

It belongs to the asfivirus C257R family.

Its subcellular location is the host membrane. The protein localises to the virion. In African swine fever virus (isolate Tick/South Africa/Pretoriuskop Pr4/1996) (ASFV), this protein is Transmembrane protein C257L.